Reading from the N-terminus, the 29-residue chain is Brevinin-2Rd (29 aa).

A disulfide bond links C23 and C29.

In terms of tissue distribution, expressed by the skin glands.

It is found in the secreted. Its function is as follows. Antimicrobial peptide. The sequence is that of Brevinin-2Rd from Pelophylax ridibundus (Marsh frog).